We begin with the raw amino-acid sequence, 241 residues long: MQSWVEVSLNTPAQLSLPLYLPDDETFASFWPGDNASLLAALQNVLRQEHSGYIYLWAREGAGRSHLLHAACAELSQRGDAVGYVPLDKRTWFVPEVLDGMEHLSLVCIDNIECVAGDELWEMAIFDLYNRILESGKTRLLITGDRPPRQLNLGLPDLASRLDWGQIYKLQPLSDEDKLQALQLRARLRGFELPEDVGRFLLKRLDREMRTLFMTLDQLDHASITAQRKLTIPFVKEILKL.

Belongs to the DnaA family. HdA subfamily. As to quaternary structure, the active form seems to be an ADP-bound monomer. Forms the RIDA complex (regulatory inactivation of DnaA) of ATP-DnaA, ADP-Hda and the DNA-loaded beta sliding clamp (dnaN).

Mediates the interaction of DNA replication initiator protein DnaA with DNA polymerase subunit beta sliding clamp (dnaN). Stimulates hydrolysis of ATP-DnaA to ADP-DnaA, rendering DnaA inactive for reinitiation, a process called regulatory inhibition of DnaA or RIDA. The polypeptide is DnaA regulatory inactivator Hda (Salmonella arizonae (strain ATCC BAA-731 / CDC346-86 / RSK2980)).